We begin with the raw amino-acid sequence, 426 residues long: Glutamate-1-semialdehyde 2,1-aminomutase (426 aa).

K265 is modified (N6-(pyridoxal phosphate)lysine).

It belongs to the class-III pyridoxal-phosphate-dependent aminotransferase family. HemL subfamily. Homodimer. Pyridoxal 5'-phosphate serves as cofactor.

It is found in the cytoplasm. It catalyses the reaction (S)-4-amino-5-oxopentanoate = 5-aminolevulinate. Its pathway is porphyrin-containing compound metabolism; protoporphyrin-IX biosynthesis; 5-aminolevulinate from L-glutamyl-tRNA(Glu): step 2/2. This Shigella sonnei (strain Ss046) protein is Glutamate-1-semialdehyde 2,1-aminomutase.